The following is a 234-amino-acid chain: Leucyl/phenylalanyl-tRNA--protein transferase (234 aa).

The protein belongs to the L/F-transferase family.

It is found in the cytoplasm. It catalyses the reaction N-terminal L-lysyl-[protein] + L-leucyl-tRNA(Leu) = N-terminal L-leucyl-L-lysyl-[protein] + tRNA(Leu) + H(+). The catalysed reaction is N-terminal L-arginyl-[protein] + L-leucyl-tRNA(Leu) = N-terminal L-leucyl-L-arginyl-[protein] + tRNA(Leu) + H(+). It carries out the reaction L-phenylalanyl-tRNA(Phe) + an N-terminal L-alpha-aminoacyl-[protein] = an N-terminal L-phenylalanyl-L-alpha-aminoacyl-[protein] + tRNA(Phe). Functions in the N-end rule pathway of protein degradation where it conjugates Leu, Phe and, less efficiently, Met from aminoacyl-tRNAs to the N-termini of proteins containing an N-terminal arginine or lysine. This Enterobacter sp. (strain 638) protein is Leucyl/phenylalanyl-tRNA--protein transferase.